The chain runs to 542 residues: Chaperonin GroEL (542 aa).

ATP is bound by residues 29 to 32, 86 to 90, Gly-413, 476 to 478, and Asp-492; these read TLGP, DGTTT, and NAA.

It belongs to the chaperonin (HSP60) family. Forms a cylinder of 14 subunits composed of two heptameric rings stacked back-to-back. Interacts with the co-chaperonin GroES.

The protein resides in the cytoplasm. It carries out the reaction ATP + H2O + a folded polypeptide = ADP + phosphate + an unfolded polypeptide.. In terms of biological role, together with its co-chaperonin GroES, plays an essential role in assisting protein folding. The GroEL-GroES system forms a nano-cage that allows encapsulation of the non-native substrate proteins and provides a physical environment optimized to promote and accelerate protein folding. This is Chaperonin GroEL from Streptococcus mutans serotype c (strain ATCC 700610 / UA159).